The following is a 346-amino-acid chain: Serpentine receptor class gamma-20 (346 aa).

Transmembrane regions (helical) follow at residues 27–47 (VMLS…SAVL), 69–89 (FFVL…IEVL), 106–128 (PFFF…CLAF), 157–177 (ILAP…WNIL), 212–232 (IPCL…LTML), 254–274 (TMLF…LPGI), and 279–299 (LLIS…ALIL).

Belongs to the nematode receptor-like protein srg family.

The protein resides in the membrane. This chain is Serpentine receptor class gamma-20 (srg-20), found in Caenorhabditis elegans.